The sequence spans 269 residues: Undecaprenyl-diphosphatase (269 aa).

The next 7 helical transmembrane spans lie at 40 to 59 (GITF…ALYF), 87 to 107 (WYII…EEPI), 116 to 136 (AIIA…DTLG), 160 to 180 (ALLP…FLGF), 188 to 208 (FSFL…VGHL), 220 to 240 (PLLI…ALLL), and 247 to 267 (SLYP…LFIF).

This sequence belongs to the UppP family.

The protein localises to the cell inner membrane. The catalysed reaction is di-trans,octa-cis-undecaprenyl diphosphate + H2O = di-trans,octa-cis-undecaprenyl phosphate + phosphate + H(+). In terms of biological role, catalyzes the dephosphorylation of undecaprenyl diphosphate (UPP). Confers resistance to bacitracin. The polypeptide is Undecaprenyl-diphosphatase (Geobacter metallireducens (strain ATCC 53774 / DSM 7210 / GS-15)).